An 83-amino-acid chain; its full sequence is MSSGGLLLLLGLLRVCAELTPVSSKDPYCNLPPDPGPCHDNKFAFYHHPASNKCKEFVYGGCGGNDNRFKTRNKCQCTCSEYP.

An N-terminal signal peptide occupies residues 1 to 24 (MSSGGLLLLLGLLRVCAELTPVSS). Positions 29-79 (CNLPPDPGPCHDNKFAFYHHPASNKCKEFVYGGCGGNDNRFKTRNKCQCTC) constitute a BPTI/Kunitz inhibitor domain. Cystine bridges form between Cys29-Cys79, Cys38-Cys62, and Cys54-Cys75.

The protein belongs to the venom Kunitz-type family. In terms of assembly, heterodimer; disulfide-linked. The A chains have phospholipase A2 activity and the B chains show homology with the basic protease inhibitors. Expressed by the venom gland.

It is found in the secreted. Beta-bungarotoxins are presynaptic neurotoxins of the venom. The B chain is homologous to venom basic protease inhibitors but has no protease inhibitor activity and blocks voltage-gated potassium channels (Kv). In Bungarus multicinctus (Many-banded krait), this protein is Kunitz-type serine protease inhibitor homolog beta-bungarotoxin B6 chain.